Reading from the N-terminus, the 305-residue chain is Putative UDP-glucose 4-epimerase (305 aa).

Residues 10–11 (FI), 30–35 (DNLTTG), 50–51 (DI), and 71–75 (QAAQI) each bind NAD(+). Substrate-binding residues include Ser115 and Tyr140. 2 residues coordinate NAD(+): Tyr140 and Lys144. Residue Tyr140 is the Proton acceptor of the active site. Residues Asn169, 183–184 (VI), 198–200 (IIF), Arg207, and 263–266 (REGE) each bind substrate.

This sequence belongs to the NAD(P)-dependent epimerase/dehydratase family. NAD(+) is required as a cofactor.

The catalysed reaction is UDP-alpha-D-glucose = UDP-alpha-D-galactose. Its pathway is carbohydrate metabolism; galactose metabolism. Involved in the metabolism of galactose. Catalyzes the conversion of UDP-galactose (UDP-Gal) to UDP-glucose (UDP-Glc) through a mechanism involving the transient reduction of NAD. The sequence is that of Putative UDP-glucose 4-epimerase from Methanocaldococcus jannaschii (strain ATCC 43067 / DSM 2661 / JAL-1 / JCM 10045 / NBRC 100440) (Methanococcus jannaschii).